The primary structure comprises 118 residues: Small ribosomal subunit protein uS13 (118 aa).

The disordered stretch occupies residues 94 to 118 (GLPVRGQRTKTNARTRKGPRKPIKK).

The protein belongs to the universal ribosomal protein uS13 family. Part of the 30S ribosomal subunit. Forms a loose heterodimer with protein S19. Forms two bridges to the 50S subunit in the 70S ribosome.

Functionally, located at the top of the head of the 30S subunit, it contacts several helices of the 16S rRNA. In the 70S ribosome it contacts the 23S rRNA (bridge B1a) and protein L5 of the 50S subunit (bridge B1b), connecting the 2 subunits; these bridges are implicated in subunit movement. Contacts the tRNAs in the A and P-sites. The sequence is that of Small ribosomal subunit protein uS13 from Salmonella paratyphi A (strain ATCC 9150 / SARB42).